The primary structure comprises 209 residues: Chaperone protein TorD (209 aa).

It belongs to the TorD/DmsD family. TorD subfamily.

It localises to the cytoplasm. Involved in the biogenesis of TorA. Acts on TorA before the insertion of the molybdenum cofactor and, as a result, probably favors a conformation of the apoenzyme that is competent for acquiring the cofactor. This Shewanella massilia protein is Chaperone protein TorD.